A 193-amino-acid polypeptide reads, in one-letter code: Imidazoleglycerol-phosphate dehydratase (193 aa).

It belongs to the imidazoleglycerol-phosphate dehydratase family.

The protein localises to the cytoplasm. The catalysed reaction is D-erythro-1-(imidazol-4-yl)glycerol 3-phosphate = 3-(imidazol-4-yl)-2-oxopropyl phosphate + H2O. Its pathway is amino-acid biosynthesis; L-histidine biosynthesis; L-histidine from 5-phospho-alpha-D-ribose 1-diphosphate: step 6/9. This Saccharolobus solfataricus (strain ATCC 35092 / DSM 1617 / JCM 11322 / P2) (Sulfolobus solfataricus) protein is Imidazoleglycerol-phosphate dehydratase (hisB).